Here is a 176-residue protein sequence, read N- to C-terminus: Dual specificity phosphatase 28 (176 aa).

Residues 17–159 (PPLVRVAPSL…LQKYEEALQA (143 aa)) form the Tyrosine-protein phosphatase domain. The active-site Phosphocysteine intermediate is the Cys-103.

Belongs to the protein-tyrosine phosphatase family. Non-receptor class dual specificity subfamily. As to quaternary structure, monomer.

It carries out the reaction O-phospho-L-tyrosyl-[protein] + H2O = L-tyrosyl-[protein] + phosphate. The enzyme catalyses O-phospho-L-seryl-[protein] + H2O = L-seryl-[protein] + phosphate. The catalysed reaction is O-phospho-L-threonyl-[protein] + H2O = L-threonyl-[protein] + phosphate. In terms of biological role, has phosphatase activity with the synthetic substrate 6,8-difluoro-4-methylumbelliferyl phosphate (in vitro). Has almost no detectable activity with phosphotyrosine, even less activity with phosphothreonine and displays complete lack of activity with phosphoserine. The poor activity with phosphotyrosine may be due to steric hindrance by bulky amino acid sidechains that obstruct access to the active site. This chain is Dual specificity phosphatase 28 (DUSP28), found in Homo sapiens (Human).